Reading from the N-terminus, the 471-residue chain is V-type ATP synthase beta chain (471 aa).

It belongs to the ATPase alpha/beta chains family.

Its function is as follows. Produces ATP from ADP in the presence of a proton gradient across the membrane. The V-type beta chain is a regulatory subunit. In Deinococcus radiodurans (strain ATCC 13939 / DSM 20539 / JCM 16871 / CCUG 27074 / LMG 4051 / NBRC 15346 / NCIMB 9279 / VKM B-1422 / R1), this protein is V-type ATP synthase beta chain (atpB).